A 1143-amino-acid polypeptide reads, in one-letter code: Disease resistance protein Piks-1 (1143 aa).

A structured coiled coil (CC) domain region spans residues methionine 1–glutamine 190. Residues methionine 189 to valine 258 enclose the HMA domain. Residues lysine 191–aspartate 264 form an HMA-like domain region. In terms of domain architecture, NB-ARC spans histidine 282–glutamate 570. LRR repeat units follow at residues phenylalanine 681–glutamine 706, serine 708–leucine 731, lysine 732–leucine 754, histidine 756–leucine 777, glutamine 778–leucine 800, asparagine 802–leucine 823, asparagine 824–glutamine 848, methionine 945–threonine 968, aspartate 979–phenylalanine 1002, and alanine 1004–cysteine 1027.

The protein belongs to the disease resistance NB-LRR family. As to quaternary structure, interacts with AVR-Pik through its N-terminal part containing the HMA-like domain.

Disease resistance (R) protein that specifically recognizes the AVR-Pik effector avirulence protein from M.oryzae. Resistance proteins guard the plant against pathogens that contain an appropriate avirulence protein via an indirect interaction with this avirulence protein. That triggers a defense system including the hypersensitive response, which restricts the pathogen growth. In Oryza sativa subsp. japonica (Rice), this protein is Disease resistance protein Piks-1.